Reading from the N-terminus, the 267-residue chain is Putative phosphatase bbp_030 (267 aa).

Catalysis depends on aspartate 8, which acts as the Nucleophile. Aspartate 8 lines the Mg(2+) pocket. Leucine 9 provides a ligand contact to phosphate. Aspartate 10 provides a ligand contact to Mg(2+). Phosphate-binding positions include 42–43 (TG) and lysine 191. Aspartate 214 provides a ligand contact to Mg(2+). Asparagine 217 is a phosphate binding site.

It belongs to the HAD-like hydrolase superfamily. Cof family. It depends on Mg(2+) as a cofactor.

This chain is Putative phosphatase bbp_030, found in Buchnera aphidicola subsp. Baizongia pistaciae (strain Bp).